A 313-amino-acid polypeptide reads, in one-letter code: Olfactory receptor 4M1 (313 aa).

Topologically, residues 1–25 (METANYTKVTEFVLTGLSQTREVQL) are extracellular. An N-linked (GlcNAc...) asparagine glycan is attached at asparagine 5. The helical transmembrane segment at 26-49 (VLFVIFLSFYLFILPGNILIICTI) threads the bilayer. At 50–57 (RLDPHLTS) the chain is on the cytoplasmic side. Residues 58–79 (PMYFLLANLALLDIWYSSITAP) traverse the membrane as a helical segment. The Extracellular portion of the chain corresponds to 80–100 (KMLIDFFVERKIISFGGCIAQ). Cysteine 97 and cysteine 189 are oxidised to a cystine. Residues 101–120 (LFFLHFVGASEMFLLTVMAY) traverse the membrane as a helical segment. Topologically, residues 121–139 (DRYAAICRPLHYATIMNRR) are cytoplasmic. The helical transmembrane segment at 140–158 (LCCILVALSWMGGFIHSII) threads the bilayer. Over 159 to 195 (QVALIVRLPFCGPNELDSYFCDITQVVRIACANTFPE) the chain is Extracellular. Residues 196–219 (ELVMICSSGLISVVCFIALLMSYA) traverse the membrane as a helical segment. At 220–237 (FLLALLKKHSGSGENTNR) the chain is on the cytoplasmic side. The helical transmembrane segment at 238–260 (AMSTCYSHITIVVLMFGPSIYIY) threads the bilayer. The Extracellular segment spans residues 261-271 (ARPFDSFSLDK). The chain crosses the membrane as a helical span at residues 272–291 (VVSVFHTVIFPLLNPIIYTL). Residues 292-313 (RNKEVKAAMRKVVTKYILCEEK) lie on the Cytoplasmic side of the membrane.

The protein belongs to the G-protein coupled receptor 1 family. In terms of tissue distribution, highly expressed in the testis and olfactory bulb.

It localises to the cell membrane. Olfactory receptor that acts as a receptor of Asprosin hormone, potentially at the surface of hepatocytes and may help to promote hepatocyte glucose release. The protein is Olfactory receptor 4M1 of Homo sapiens (Human).